The following is a 282-amino-acid chain: Elongation factor Ts (282 aa).

The tract at residues 80-83 (TDFV) is involved in Mg(2+) ion dislocation from EF-Tu.

Belongs to the EF-Ts family.

It is found in the cytoplasm. In terms of biological role, associates with the EF-Tu.GDP complex and induces the exchange of GDP to GTP. It remains bound to the aminoacyl-tRNA.EF-Tu.GTP complex up to the GTP hydrolysis stage on the ribosome. This Pasteurella multocida (strain Pm70) protein is Elongation factor Ts (tsf).